The chain runs to 700 residues: Beta-galactosidase Bga (700 aa).

A substrate-binding site is contributed by R103. Residue C107 participates in Zn(2+) binding. N141 contacts substrate. The active-site Proton donor is the E142. Positions 151, 153, and 156 each coordinate Zn(2+). The Nucleophile role is filled by E312. Residues W320 and 360–363 (EQYH) each bind substrate. The segment covering 648–658 (DPESLAVDDTD) has biased composition (acidic residues). Positions 648–674 (DPESLAVDDTDRDGFDPMADDDKDSSA) are disordered.

It belongs to the glycosyl hydrolase 42 family.

It carries out the reaction Hydrolysis of terminal non-reducing beta-D-galactose residues in beta-D-galactosides.. Requires 4 M NaCl or KCl for maximal activity. Functionally, cleaves o-nitrophenyl-beta-D-galactopyranoside (ONPG) in vitro. The polypeptide is Beta-galactosidase Bga (Halorubrum lacusprofundi (strain ATCC 49239 / DSM 5036 / JCM 8891 / ACAM 34)).